Here is a 242-residue protein sequence, read N- to C-terminus: Biosynthetic peptidoglycan transglycosylase (242 aa).

A helical transmembrane segment spans residues 18–38 (VIMAVLCIAILYQLWMFSLVV).

This sequence belongs to the glycosyltransferase 51 family.

The protein localises to the cell inner membrane. The catalysed reaction is [GlcNAc-(1-&gt;4)-Mur2Ac(oyl-L-Ala-gamma-D-Glu-L-Lys-D-Ala-D-Ala)](n)-di-trans,octa-cis-undecaprenyl diphosphate + beta-D-GlcNAc-(1-&gt;4)-Mur2Ac(oyl-L-Ala-gamma-D-Glu-L-Lys-D-Ala-D-Ala)-di-trans,octa-cis-undecaprenyl diphosphate = [GlcNAc-(1-&gt;4)-Mur2Ac(oyl-L-Ala-gamma-D-Glu-L-Lys-D-Ala-D-Ala)](n+1)-di-trans,octa-cis-undecaprenyl diphosphate + di-trans,octa-cis-undecaprenyl diphosphate + H(+). Its pathway is cell wall biogenesis; peptidoglycan biosynthesis. Its function is as follows. Peptidoglycan polymerase that catalyzes glycan chain elongation from lipid-linked precursors. This chain is Biosynthetic peptidoglycan transglycosylase, found in Bordetella bronchiseptica (strain ATCC BAA-588 / NCTC 13252 / RB50) (Alcaligenes bronchisepticus).